The following is a 388-amino-acid chain: Oligogalacturonide lyase (388 aa).

The protein localises to the periplasm. It catalyses the reaction 4-(4-deoxy-alpha-D-galact-4-enuronosyl)-D-galacturonate = 2 5-dehydro-4-deoxy-D-glucuronate. It participates in glycan metabolism; pectin degradation; 2-dehydro-3-deoxy-D-gluconate from pectin: step 3/5. Its function is as follows. Involved in degradation of pectin, which causes soft-rod disease in plants. The chain is Oligogalacturonide lyase (ogl) from Pectobacterium atrosepticum (strain SCRI 1043 / ATCC BAA-672) (Erwinia carotovora subsp. atroseptica).